The following is a 515-amino-acid chain: Maturase K (515 aa).

It belongs to the intron maturase 2 family. MatK subfamily.

The protein localises to the plastid. Its subcellular location is the chloroplast. Functionally, usually encoded in the trnK tRNA gene intron. Probably assists in splicing its own and other chloroplast group II introns. The sequence is that of Maturase K from Picea mariana (Black spruce).